The sequence spans 504 residues: Lysine--tRNA ligase (504 aa).

Glu404 and Glu411 together coordinate Mg(2+).

The protein belongs to the class-II aminoacyl-tRNA synthetase family. As to quaternary structure, homodimer. The cofactor is Mg(2+).

Its subcellular location is the cytoplasm. It catalyses the reaction tRNA(Lys) + L-lysine + ATP = L-lysyl-tRNA(Lys) + AMP + diphosphate. This is Lysine--tRNA ligase from Aliarcobacter butzleri (strain RM4018) (Arcobacter butzleri).